The primary structure comprises 264 residues: Thymidylate synthase (264 aa).

Arg21 lines the dUMP pocket. Position 51 (His51) interacts with (6R)-5,10-methylene-5,6,7,8-tetrahydrofolate. A dUMP-binding site is contributed by 126 to 127; it reads RR. Cys146 acts as the Nucleophile in catalysis. DUMP is bound by residues 166–169, Asn177, and 207–209; these read RSAD and HLY. Asp169 lines the (6R)-5,10-methylene-5,6,7,8-tetrahydrofolate pocket. Ala263 is a binding site for (6R)-5,10-methylene-5,6,7,8-tetrahydrofolate.

The protein belongs to the thymidylate synthase family. Bacterial-type ThyA subfamily. In terms of assembly, homodimer.

The protein localises to the cytoplasm. It catalyses the reaction dUMP + (6R)-5,10-methylene-5,6,7,8-tetrahydrofolate = 7,8-dihydrofolate + dTMP. It functions in the pathway pyrimidine metabolism; dTTP biosynthesis. Functionally, catalyzes the reductive methylation of 2'-deoxyuridine-5'-monophosphate (dUMP) to 2'-deoxythymidine-5'-monophosphate (dTMP) while utilizing 5,10-methylenetetrahydrofolate (mTHF) as the methyl donor and reductant in the reaction, yielding dihydrofolate (DHF) as a by-product. This enzymatic reaction provides an intracellular de novo source of dTMP, an essential precursor for DNA biosynthesis. The polypeptide is Thymidylate synthase (Bartonella quintana (strain Toulouse) (Rochalimaea quintana)).